A 141-amino-acid chain; its full sequence is Pyrophosphate-energized proton pump (141 aa).

A run of 3 helical transmembrane segments spans residues G11–V31, G46–I66, and L121–I141.

This sequence belongs to the H(+)-translocating pyrophosphatase (TC 3.A.10) family. In terms of assembly, homodimer. Requires Mg(2+) as cofactor.

It localises to the cell inner membrane. It catalyses the reaction diphosphate + H2O + H(+)(in) = 2 phosphate + 2 H(+)(out). Its function is as follows. Proton pump that utilizes the energy of pyrophosphate hydrolysis as the driving force for proton movement across the membrane. Generates a proton motive force. The polypeptide is Pyrophosphate-energized proton pump (hppA) (Anaplasma marginale).